We begin with the raw amino-acid sequence, 35 residues long: Antimicrobial peptide 3 (35 aa).

Positions 4-35 (GGECGGRFGGCAGGQCCSRFGFCGSGPKYCAH) constitute a Chitin-binding type-1 domain. 3 disulfide bridges follow: C7–C20, C14–C26, and C19–C33.

Post-translationally, contains 3 disulfide bonds. Expressed in leaf, flower, stem and seed with highest expression in leaf (at protein level).

In terms of biological role, has antifungal activity against A.niger (IC(50)=5.4 uM), B.sorokiniana (IC(50)=2.0 uM), B.cinerea (IC(50)=1.6 uM), F.solani (IC(50)=3.7 uM) and A.alternata (IC(50)=5.0 uM). Binds chitin in vitro. Has no antibacterial activity at concentrations up to 10 uM. The chain is Antimicrobial peptide 3 from Stellaria media (Common chickweed).